The primary structure comprises 348 residues: Pheromone P-factor receptor (348 aa).

Transmembrane regions (helical) follow at residues leucine 46–leucine 69, valine 79–serine 103, valine 125–alanine 141, isoleucine 162–threonine 180, tyrosine 207–phenylalanine 225, cysteine 249–isoleucine 267, and cysteine 283–leucine 301.

Belongs to the G-protein coupled receptor 4 family.

The protein localises to the membrane. Receptor for the peptide pheromone P-factor, a mating factor of S.pombe. Pheromone signaling is essential for initiation of meiosis in S.pombe; P-factor signaling alone may be sufficient. The polypeptide is Pheromone P-factor receptor (mam2) (Schizosaccharomyces pombe (strain 972 / ATCC 24843) (Fission yeast)).